The following is a 467-amino-acid chain: Proton extrusion protein PxcA (467 aa).

Residues 146 to 161 (SQVRTTSSQPPENPSL) are compositionally biased toward polar residues. Disordered stretches follow at residues 146–167 (SQVR…ALRT) and 186–205 (PQLI…KADT). The span at 191–203 (QRTEQSKKSRGKA) shows a compositional bias: basic and acidic residues. The next 4 membrane-spanning stretches (helical) occupy residues 249 to 269 (FILL…ALIV), 352 to 372 (IFSV…IMVL), 391 to 411 (IIIL…WEVI), and 427 to 447 (FIFL…KYWI).

The protein belongs to the CemA family.

Its subcellular location is the cell inner membrane. Required for H(+) efflux immediately after light irradiation to form a rapid H(+) concentration gradient across the thylakoid membranes. Together with PxcL, contributes to transient H(+) uptake following dark to light transition. This chain is Proton extrusion protein PxcA, found in Nostoc sp. (strain PCC 7120 / SAG 25.82 / UTEX 2576).